Consider the following 182-residue polypeptide: Crossover junction endodeoxyribonuclease RuvC (182 aa).

Active-site residues include D7, E68, and D141. Residues D7, E68, and D141 each coordinate Mg(2+).

This sequence belongs to the RuvC family. In terms of assembly, homodimer which binds Holliday junction (HJ) DNA. The HJ becomes 2-fold symmetrical on binding to RuvC with unstacked arms; it has a different conformation from HJ DNA in complex with RuvA. In the full resolvosome a probable DNA-RuvA(4)-RuvB(12)-RuvC(2) complex forms which resolves the HJ. It depends on Mg(2+) as a cofactor.

It is found in the cytoplasm. The enzyme catalyses Endonucleolytic cleavage at a junction such as a reciprocal single-stranded crossover between two homologous DNA duplexes (Holliday junction).. In terms of biological role, the RuvA-RuvB-RuvC complex processes Holliday junction (HJ) DNA during genetic recombination and DNA repair. Endonuclease that resolves HJ intermediates. Cleaves cruciform DNA by making single-stranded nicks across the HJ at symmetrical positions within the homologous arms, yielding a 5'-phosphate and a 3'-hydroxyl group; requires a central core of homology in the junction. The consensus cleavage sequence is 5'-(A/T)TT(C/G)-3'. Cleavage occurs on the 3'-side of the TT dinucleotide at the point of strand exchange. HJ branch migration catalyzed by RuvA-RuvB allows RuvC to scan DNA until it finds its consensus sequence, where it cleaves and resolves the cruciform DNA. This chain is Crossover junction endodeoxyribonuclease RuvC, found in Thermobifida fusca (strain YX).